We begin with the raw amino-acid sequence, 449 residues long: Trigger factor (449 aa).

A PPIase FKBP-type domain is found at 162 to 243; sequence GEFVTINITA…ITATKQRELP (82 aa). Positions 428-437 are enriched in basic and acidic residues; sequence GNEIDPKEYF. Residues 428-449 form a disordered region; sequence GNEIDPKEYFGEEEVAETESEA. The segment covering 438–449 has biased composition (acidic residues); that stretch reads GEEEVAETESEA.

This sequence belongs to the FKBP-type PPIase family. Tig subfamily.

Its subcellular location is the cytoplasm. It carries out the reaction [protein]-peptidylproline (omega=180) = [protein]-peptidylproline (omega=0). Functionally, involved in protein export. Acts as a chaperone by maintaining the newly synthesized protein in an open conformation. Functions as a peptidyl-prolyl cis-trans isomerase. This chain is Trigger factor, found in Corynebacterium glutamicum (strain R).